Reading from the N-terminus, the 202-residue chain is Holliday junction branch migration complex subunit RuvA (202 aa).

The segment at 1–64 is domain I; it reads MISRLRGTVL…EDAFDLFGFL (64 aa). Positions 65–143 are domain II; sequence TKGEEEVFLL…TIHLEAVSRG (79 aa). A flexible linker region spans residues 143–147; that stretch reads GTAPA. Positions 148–202 are domain III; it reads AVSGAHADLVSALLNLGYKQPQAEKAADLASERLGAEATFQALFREALKALRSGG.

It belongs to the RuvA family. In terms of assembly, homotetramer. Forms an RuvA(8)-RuvB(12)-Holliday junction (HJ) complex. HJ DNA is sandwiched between 2 RuvA tetramers; dsDNA enters through RuvA and exits via RuvB. An RuvB hexamer assembles on each DNA strand where it exits the tetramer. Each RuvB hexamer is contacted by two RuvA subunits (via domain III) on 2 adjacent RuvB subunits; this complex drives branch migration. In the full resolvosome a probable DNA-RuvA(4)-RuvB(12)-RuvC(2) complex forms which resolves the HJ.

The protein resides in the cytoplasm. The RuvA-RuvB-RuvC complex processes Holliday junction (HJ) DNA during genetic recombination and DNA repair, while the RuvA-RuvB complex plays an important role in the rescue of blocked DNA replication forks via replication fork reversal (RFR). RuvA specifically binds to HJ cruciform DNA, conferring on it an open structure. The RuvB hexamer acts as an ATP-dependent pump, pulling dsDNA into and through the RuvAB complex. HJ branch migration allows RuvC to scan DNA until it finds its consensus sequence, where it cleaves and resolves the cruciform DNA. This Myxococcus xanthus (strain DK1622) protein is Holliday junction branch migration complex subunit RuvA.